Reading from the N-terminus, the 155-residue chain is Small ribosomal subunit protein uS7c (155 aa).

This sequence belongs to the universal ribosomal protein uS7 family. In terms of assembly, part of the 30S ribosomal subunit.

It is found in the plastid. Its subcellular location is the chloroplast. One of the primary rRNA binding proteins, it binds directly to 16S rRNA where it nucleates assembly of the head domain of the 30S subunit. This Cornus mas (Cornelian cherry dogwood) protein is Small ribosomal subunit protein uS7c (rps7).